A 382-amino-acid chain; its full sequence is 6-hydroxynicotinate 3-monooxygenase (382 aa).

A signal peptide spans 1–25 (MRGRQKIAIVGAGLGGAAAATLLQQ). FAD is bound by residues glycine 15, 34 to 35 (EQ), histidine 47, arginine 108, and leucine 130. Histidine 47 functions as the Proton acceptor in the catalytic mechanism. The Proton acceptor role is filled by tyrosine 215. FAD is bound by residues aspartate 294 and 307–308 (AC).

The protein belongs to the 6-hydroxynicotinate 3-monooxygenase family. Monomer. FAD serves as cofactor.

The enzyme catalyses 6-hydroxynicotinate + NADH + O2 + 2 H(+) = 2,5-dihydroxypyridine + CO2 + NAD(+) + H2O. Its pathway is cofactor degradation; nicotinate degradation. In terms of biological role, flavin-dependent monooxygenase (FMO) that catalyzes the decarboxylative hydroxylation of 6-hydroxynicotinic acid (6-HNA) to 2,5-dihydroxypyridine (2,5-DHP) with concomitant oxidation of NADH, a step in the aerobic nicotinate degradation pathway. The polypeptide is 6-hydroxynicotinate 3-monooxygenase (Pseudomonas putida (strain ATCC 47054 / DSM 6125 / CFBP 8728 / NCIMB 11950 / KT2440)).